Here is a 368-residue protein sequence, read N- to C-terminus: PPE family immunomodulator PPE68 (368 aa).

Disordered regions lie at residues 255 to 280 (LGTS…LLRA) and 312 to 368 (AAAG…EDDW). Low complexity predominate over residues 312–327 (AAAGSSATGGAAPVGA). The segment covering 354–368 (REEDDEDDWDEEDDW) has biased composition (acidic residues).

It belongs to the mycobacterial PPE family. In terms of assembly, homodimer. Interacts with PE35. PE35/PPE68 complex interacts with human TLR2.

It is found in the secreted. Its subcellular location is the cell wall. It localises to the cell membrane. The protein localises to the cell surface. In terms of biological role, plays a major role in RD1-associated pathogenesis, and may contribute to the establishment and maintenance of M.tuberculosis infection. Together with PE35, stimulates the secretion of IL-10 and MCP-1 from human macrophages, via the interaction with human Toll-like receptor 2 (TLR2). This chain is PPE family immunomodulator PPE68 (PPE68), found in Mycobacterium tuberculosis (strain CDC 1551 / Oshkosh).